A 398-amino-acid polypeptide reads, in one-letter code: Calcium-binding and coiled-coil domain-containing protein 2 (398 aa).

Positions 133–136 match the CLIR motif; it reads ILVV. The stretch at 137-301 forms a coiled coil; the sequence is TTQGEVEEIE…RENSRLLSYM (165 aa). Positions 203–206 match the LIR-like motif; the sequence is DYWE. The interval 314–341 is disordered; that stretch reads TSDEGGAGQNPGLVYGNPYSGIQESSSP. An interaction with LGALS8 region spans residues 323-333; it reads NPGLVYGNPYS. Positions 347–398 are interaction with MYO6; that stretch reads KKCPICKADDICDHTLEQQQMQALCLNCPICDKIFPATEKQIFEDHVFCHSL. The UBZ1-type zinc finger occupies 371-396; it reads CLNCPICDKIFPATEKQIFEDHVFCH. 4 residues coordinate Zn(2+): cysteine 374, cysteine 377, histidine 392, and histidine 396. Serine 397 is subject to Phosphoserine.

It belongs to the CALCOCO family. Dimer. Part of a complex consisting of CALCOCO2, TAX1BP1 and MYO6. Interacts with MYO6. Interacts with GEMIN4. Interacts with ATG8 family members MAP1LC3A, MAP1LC3B, GABARAP, GABARAPL1 and GABARAPL2. Interacts with ATG8 family member MAP1LC3C. Interacts with LGALS8. Interacts with TOM1; the interaction is indirect and is mediated by MYO6, which acts as a bridge between TOM1 and CALCOCO2. Interacts with AZI2.

The protein resides in the cytoplasm. The protein localises to the perinuclear region. Its subcellular location is the cytoskeleton. It is found in the cytoplasmic vesicle. It localises to the autophagosome membrane. Functionally, xenophagy-specific receptor required for autophagy-mediated intracellular bacteria degradation. Acts as an effector protein of galectin-sensed membrane damage that restricts the proliferation of infecting pathogens upon entry into the cytosol by targeting LGALS8-associated bacteria for autophagy. Initially orchestrates bacteria targeting to autophagosomes and subsequently ensures pathogen degradation by regulating pathogen-containing autophagosome maturation. Bacteria targeting to autophagosomes relies on its interaction with MAP1LC3A, MAP1LC3B and/or GABARAPL2, whereas regulation of pathogen-containing autophagosome maturation requires the interaction with MAP3LC3C. May play a role in ruffle formation and actin cytoskeleton organization and seems to negatively regulate constitutive secretion. This is Calcium-binding and coiled-coil domain-containing protein 2 from Macaca fascicularis (Crab-eating macaque).